A 270-amino-acid polypeptide reads, in one-letter code: Putative phosphoenolpyruvate synthase regulatory protein (270 aa).

An ADP-binding site is contributed by Gly150–Thr157.

Belongs to the pyruvate, phosphate/water dikinase regulatory protein family. PSRP subfamily.

The enzyme catalyses [pyruvate, water dikinase] + ADP = [pyruvate, water dikinase]-phosphate + AMP + H(+). It carries out the reaction [pyruvate, water dikinase]-phosphate + phosphate + H(+) = [pyruvate, water dikinase] + diphosphate. In terms of biological role, bifunctional serine/threonine kinase and phosphorylase involved in the regulation of the phosphoenolpyruvate synthase (PEPS) by catalyzing its phosphorylation/dephosphorylation. In Shewanella frigidimarina (strain NCIMB 400), this protein is Putative phosphoenolpyruvate synthase regulatory protein.